We begin with the raw amino-acid sequence, 67 residues long: Large ribosomal subunit protein bL35 (67 aa).

It belongs to the bacterial ribosomal protein bL35 family.

This chain is Large ribosomal subunit protein bL35, found in Paramagnetospirillum magneticum (strain ATCC 700264 / AMB-1) (Magnetospirillum magneticum).